Reading from the N-terminus, the 334-residue chain is UDP-N-acetylglucosamine--N-acetylmuramyl-(pentapeptide) pyrophosphoryl-undecaprenol N-acetylglucosamine transferase (334 aa).

UDP-N-acetyl-alpha-D-glucosamine is bound by residues 11–13, N125, S185, I229, and Q274; that span reads TGG.

The protein belongs to the glycosyltransferase 28 family. MurG subfamily.

It is found in the cell inner membrane. The enzyme catalyses di-trans,octa-cis-undecaprenyl diphospho-N-acetyl-alpha-D-muramoyl-L-alanyl-D-glutamyl-meso-2,6-diaminopimeloyl-D-alanyl-D-alanine + UDP-N-acetyl-alpha-D-glucosamine = di-trans,octa-cis-undecaprenyl diphospho-[N-acetyl-alpha-D-glucosaminyl-(1-&gt;4)]-N-acetyl-alpha-D-muramoyl-L-alanyl-D-glutamyl-meso-2,6-diaminopimeloyl-D-alanyl-D-alanine + UDP + H(+). The protein operates within cell wall biogenesis; peptidoglycan biosynthesis. Cell wall formation. Catalyzes the transfer of a GlcNAc subunit on undecaprenyl-pyrophosphoryl-MurNAc-pentapeptide (lipid intermediate I) to form undecaprenyl-pyrophosphoryl-MurNAc-(pentapeptide)GlcNAc (lipid intermediate II). This is UDP-N-acetylglucosamine--N-acetylmuramyl-(pentapeptide) pyrophosphoryl-undecaprenol N-acetylglucosamine transferase from Thermosipho africanus (strain TCF52B).